The sequence spans 111 residues: Small ribosomal subunit protein bS16 (111 aa).

The protein belongs to the bacterial ribosomal protein bS16 family.

The chain is Small ribosomal subunit protein bS16 from Rickettsia prowazekii (strain Madrid E).